The following is a 277-amino-acid chain: Putative hydroxypyruvate isomerase (277 aa).

Active-site proton donor/acceptor residues include Glu150 and Glu249.

It belongs to the hyi family.

It catalyses the reaction 3-hydroxypyruvate = 2-hydroxy-3-oxopropanoate. Its function is as follows. Catalyzes the reversible isomerization between hydroxypyruvate and 2-hydroxy-3-oxopropanoate (also termed tartronate semialdehyde). This chain is Putative hydroxypyruvate isomerase (HYI), found in Homo sapiens (Human).